The following is a 318-amino-acid chain: Decaprenyl-phosphate phosphoribosyltransferase (318 aa).

2 helical membrane passes run 33–53 (WIKN…GIEY) and 59–79 (AAKV…IYLI). 5-phospho-alpha-D-ribose 1-diphosphate-binding residues include Lys35 and Tyr77. Mg(2+) is bound by residues Asn80 and Asp84. Lys94 is a binding site for 5-phospho-alpha-D-ribose 1-diphosphate. A run of 2 helical transmembrane segments spans residues 99–119 (IAAG…LAVA) and 121–141 (LVIS…YIAV). 5-phospho-alpha-D-ribose 1-diphosphate contacts are provided by Lys150 and Arg167. 2 helical membrane passes run 153 to 173 (AVLD…AGGV) and 177 to 197 (IPLS…MAAG). Position 198 (Lys198) interacts with trans,octa-cis-decaprenyl phosphate. Transmembrane regions (helical) follow at residues 225–245 (LRFV…LWAF), 262–282 (SWYA…AVDI), and 298–318 (RVLQ…IYFS).

Belongs to the UbiA prenyltransferase family. DPPR synthase subfamily. Mg(2+) serves as cofactor.

Its subcellular location is the cell inner membrane. It catalyses the reaction trans,octa-cis-decaprenyl phosphate + 5-phospho-alpha-D-ribose 1-diphosphate + H(+) = trans,octa-cis-decaprenylphospho-beta-D-ribofuranose 5-phosphate + diphosphate. It participates in cell wall biogenesis; cell wall polysaccharide biosynthesis. Functionally, involved in the biosynthesis of decaprenylphosphoryl arabinose (DPA) a precursor for arabinan synthesis in mycobacterial cell wall biosynthesis. Catalyzes the transfer of a 5-phosphoribosyl residue from phosphoribose diphosphate (PRPP) to decaprenyl phosphate (DP) to form decaprenylphosphoryl-5-phosphoribose (DPPR). The sequence is that of Decaprenyl-phosphate phosphoribosyltransferase from Mycolicibacterium smegmatis (strain ATCC 700084 / mc(2)155) (Mycobacterium smegmatis).